We begin with the raw amino-acid sequence, 765 residues long: Protein transport protein Sec23A (765 aa).

Zn(2+)-binding residues include cysteine 61, cysteine 66, cysteine 85, and cysteine 88. A Gelsolin-like repeat occupies 632–718 (PEPVLLDSSS…EHGGSQARFL (87 aa)).

It belongs to the SEC23/SEC24 family. SEC23 subfamily. In terms of assembly, COPII is composed of at least five proteins: the Sec23/24 complex, the Sec13/31 complex and Sar1.

It localises to the cytoplasmic vesicle. The protein localises to the COPII-coated vesicle membrane. It is found in the endoplasmic reticulum membrane. Its subcellular location is the cytoplasm. The protein resides in the cytosol. Its function is as follows. Component of the coat protein complex II (COPII) which promotes the formation of transport vesicles from the endoplasmic reticulum (ER). The coat has two main functions, the physical deformation of the endoplasmic reticulum membrane into vesicles and the selection of cargo molecules for their transport to the Golgi complex. This chain is Protein transport protein Sec23A, found in Xenopus tropicalis (Western clawed frog).